Consider the following 468-residue polypeptide: Putative magnesium transporter MRS2-G (468 aa).

Disordered stretches follow at residues 1-76 (MGRR…AGKV) and 182-205 (NGQP…VPRL). Composition is skewed to low complexity over residues 14–23 (ASNASTSSST) and 31–45 (RLPS…SSPS). Pro residues predominate over residues 46 to 67 (PASPSPPPPSASHPAPPSPPLA). The segment covering 187 to 197 (GDDHGEKHDDS) has biased composition (basic and acidic residues). Helical transmembrane passes span 402–422 (LTLT…GAFA) and 437–457 (FFWP…IVLL).

Belongs to the CorA metal ion transporter (MIT) (TC 1.A.35.5) family.

The protein localises to the membrane. Putative magnesium transporter. The protein is Putative magnesium transporter MRS2-G (MRS2-G) of Oryza sativa subsp. indica (Rice).